The chain runs to 119 residues: U-scoloptoxin(01)-Er1a (119 aa).

A signal peptide spans 1–22; sequence MEIHSNIILLLLIALFAIFVKM. Residues 39–97 form the Chitin-binding type-2 domain; it reads NFACSGKKPGFYADEGFDCQVYHMCSPEGQLTTYLCGPGTIFNQKKLVCDLPTNYNCAD. A disulfide bridge links cysteine 74 with cysteine 87.

This sequence belongs to the scoloptoxin-01 family. In terms of processing, contains 3 disulfide bonds. In terms of tissue distribution, expressed by the venom gland.

The protein localises to the secreted. This is U-scoloptoxin(01)-Er1a from Ethmostigmus rubripes (Giant centipede).